Here is a 750-residue protein sequence, read N- to C-terminus: Photosystem I P700 chlorophyll a apoprotein A1 (750 aa).

8 helical membrane-spanning segments follow: residues 70–93 (VFSA…FHGA), 156–179 (LYCT…FHYH), 195–219 (LNHH…HVSL), 291–309 (IAHH…GHMY), 346–369 (WHAQ…HHMY), 385–411 (LSLF…IFMV), 433–455 (AIIS…LYIH), and 531–549 (FLVH…LILL). [4Fe-4S] cluster is bound by residues cysteine 573 and cysteine 582. 2 helical membrane passes run 589 to 610 (HVFL…HFSW) and 664 to 686 (LSAY…MFLF). Histidine 675 is a binding site for chlorophyll a'. Methionine 683 and tyrosine 691 together coordinate chlorophyll a. Tryptophan 692 contacts phylloquinone. The helical transmembrane segment at 724 to 744 (AVGVTHYLLGGIATTWAFFLA) threads the bilayer.

Belongs to the PsaA/PsaB family. The PsaA/B heterodimer binds the P700 chlorophyll special pair and subsequent electron acceptors. PSI consists of a core antenna complex that captures photons, and an electron transfer chain that converts photonic excitation into a charge separation. The eukaryotic PSI reaction center is composed of at least 11 subunits. P700 is a chlorophyll a/chlorophyll a' dimer, A0 is one or more chlorophyll a, A1 is one or both phylloquinones and FX is a shared 4Fe-4S iron-sulfur center. is required as a cofactor.

The protein resides in the plastid. It localises to the chloroplast thylakoid membrane. The catalysed reaction is reduced [plastocyanin] + hnu + oxidized [2Fe-2S]-[ferredoxin] = oxidized [plastocyanin] + reduced [2Fe-2S]-[ferredoxin]. Its function is as follows. PsaA and PsaB bind P700, the primary electron donor of photosystem I (PSI), as well as the electron acceptors A0, A1 and FX. PSI is a plastocyanin-ferredoxin oxidoreductase, converting photonic excitation into a charge separation, which transfers an electron from the donor P700 chlorophyll pair to the spectroscopically characterized acceptors A0, A1, FX, FA and FB in turn. Oxidized P700 is reduced on the lumenal side of the thylakoid membrane by plastocyanin. This is Photosystem I P700 chlorophyll a apoprotein A1 from Pelargonium hortorum (Common geranium).